The following is a 623-amino-acid chain: Glutathione import ATP-binding protein GsiA (623 aa).

ABC transporter domains are found at residues 15 to 269 and 314 to 564; these read VENL…RALL and LRVR…RKLL. ATP is bound by residues 49–56 and 357–364; these read GESGSGKS.

The protein belongs to the ABC transporter superfamily. Glutathione importer (TC 3.A.1.5.11) family. As to quaternary structure, the complex is composed of two ATP-binding proteins (GsiA), two transmembrane proteins (GsiC and GsiD) and a solute-binding protein (GsiB).

The protein localises to the cell inner membrane. The catalysed reaction is glutathione(out) + ATP + H2O = glutathione(in) + ADP + phosphate + H(+). Functionally, part of the ABC transporter complex GsiABCD involved in glutathione import. Responsible for energy coupling to the transport system. The chain is Glutathione import ATP-binding protein GsiA from Shigella dysenteriae serotype 1 (strain Sd197).